Here is a 282-residue protein sequence, read N- to C-terminus: Bis(5'-nucleosyl)-tetraphosphatase, symmetrical (282 aa).

It belongs to the Ap4A hydrolase family.

The catalysed reaction is P(1),P(4)-bis(5'-adenosyl) tetraphosphate + H2O = 2 ADP + 2 H(+). Functionally, hydrolyzes diadenosine 5',5'''-P1,P4-tetraphosphate to yield ADP. The chain is Bis(5'-nucleosyl)-tetraphosphatase, symmetrical from Salmonella paratyphi A (strain ATCC 9150 / SARB42).